The following is an 84-amino-acid chain: MADDPQEVAEHERIFKRFDANGDGKISSSELGETLKTLGSVTPEEIQRMMAEIDTDGDGFISFEEFTVFARANRGLVKDVAKIF.

EF-hand domains are found at residues 6–40 and 41–76; these read QEVA…TLGS and VTPE…NRGL. 9 residues coordinate Ca(2+): D19, N21, D23, K25, E30, D54, D56, D58, and E65.

In terms of tissue distribution, expressed exclusively in mature pollen.

It is found in the endomembrane system. In Olea europaea (Common olive), this protein is Polcalcin Ole e 3 (OLE3).